Reading from the N-terminus, the 130-residue chain is Peptide methionine sulfoxide reductase MsrB (130 aa).

Positions 1–122 (MKKREDMTEM…NSVSMAFEDS (122 aa)) constitute a MsrB domain. C39, C42, C88, and C91 together coordinate Zn(2+). C111 functions as the Nucleophile in the catalytic mechanism.

Belongs to the MsrB Met sulfoxide reductase family. Zn(2+) is required as a cofactor.

It carries out the reaction L-methionyl-[protein] + [thioredoxin]-disulfide + H2O = L-methionyl-(R)-S-oxide-[protein] + [thioredoxin]-dithiol. This chain is Peptide methionine sulfoxide reductase MsrB, found in Pasteurella multocida (strain Pm70).